A 223-amino-acid chain; its full sequence is Thiamine-phosphate synthase (223 aa).

4-amino-2-methyl-5-(diphosphooxymethyl)pyrimidine contacts are provided by residues 47 to 51 and N84; that span reads QLRDK. Mg(2+) contacts are provided by D85 and D104. S123 contributes to the 4-amino-2-methyl-5-(diphosphooxymethyl)pyrimidine binding site. 150–152 is a 2-[(2R,5Z)-2-carboxy-4-methylthiazol-5(2H)-ylidene]ethyl phosphate binding site; that stretch reads TPT. K153 lines the 4-amino-2-methyl-5-(diphosphooxymethyl)pyrimidine pocket. G182 contributes to the 2-[(2R,5Z)-2-carboxy-4-methylthiazol-5(2H)-ylidene]ethyl phosphate binding site.

It belongs to the thiamine-phosphate synthase family. Mg(2+) is required as a cofactor.

It carries out the reaction 2-[(2R,5Z)-2-carboxy-4-methylthiazol-5(2H)-ylidene]ethyl phosphate + 4-amino-2-methyl-5-(diphosphooxymethyl)pyrimidine + 2 H(+) = thiamine phosphate + CO2 + diphosphate. The enzyme catalyses 2-(2-carboxy-4-methylthiazol-5-yl)ethyl phosphate + 4-amino-2-methyl-5-(diphosphooxymethyl)pyrimidine + 2 H(+) = thiamine phosphate + CO2 + diphosphate. It catalyses the reaction 4-methyl-5-(2-phosphooxyethyl)-thiazole + 4-amino-2-methyl-5-(diphosphooxymethyl)pyrimidine + H(+) = thiamine phosphate + diphosphate. It functions in the pathway cofactor biosynthesis; thiamine diphosphate biosynthesis; thiamine phosphate from 4-amino-2-methyl-5-diphosphomethylpyrimidine and 4-methyl-5-(2-phosphoethyl)-thiazole: step 1/1. Functionally, condenses 4-methyl-5-(beta-hydroxyethyl)thiazole monophosphate (THZ-P) and 2-methyl-4-amino-5-hydroxymethyl pyrimidine pyrophosphate (HMP-PP) to form thiamine monophosphate (TMP). The sequence is that of Thiamine-phosphate synthase from Saccharopolyspora erythraea (strain ATCC 11635 / DSM 40517 / JCM 4748 / NBRC 13426 / NCIMB 8594 / NRRL 2338).